The primary structure comprises 4516 residues: Dynein axonemal heavy chain 1 (4516 aa).

The interval 1–1748 (MVTLSISDTL…YIRAVNAEFI (1748 aa)) is stem. Residues 78–160 (SSGSDKSLKN…RKSPLAGTDK (83 aa)) form a disordered region. Composition is skewed to basic and acidic residues over residues 83–97 (KSLKNGMEECDKEEA) and 113–129 (ENHDLEKMLKESSRNPE). AAA stretches follow at residues 1749-1956 (YGYE…VISA), 2016-2249 (QAIR…TTVK), 2422-2682 (TMMP…VFQG), and 2780-2972 (DYNQ…CCTI). Positions 1787–1794 (GPAGTGKT) match the GPAGTGKT motif motif. Position 1787-1794 (1787-1794 (GPAGTGKT)) interacts with ATP. The CFDEFNR motif motif lies at 1837–1843 (CFDEFNR). Residues 2054–2061 (GPTGSGKS), 2460–2467 (GPTGTGKT), and 2819–2826 (GVGGSGRS) contribute to the ATP site. A stalk region spans residues 2987–3285 (ATRFLHEIPE…MHKYHFVAKA (299 aa)). The stretch at 3293 to 3394 (LREAQDDLEV…QDTVENLENM (102 aa)) forms a coiled coil. 2 AAA regions span residues 3388–3618 (VENL…EERP) and 3831–4050 (LPAF…SYNS).

Belongs to the dynein heavy chain family. In terms of assembly, consists of at least two heavy chains and a number of intermediate and light chains. Expressed in brain.

The protein localises to the cytoplasm. The protein resides in the cytoskeleton. It is found in the cilium axoneme. Its subcellular location is the cell projection. It localises to the cilium. The protein localises to the flagellum. In terms of biological role, force generating protein of cilia required for sperm flagellum motility. Produces force towards the minus ends of microtubules. Dynein has ATPase activity; the force-producing power stroke is thought to occur on release of ADP. Required in spermatozoa for the formation of the inner dynein arms and biogenesis of the axoneme. This Rattus norvegicus (Rat) protein is Dynein axonemal heavy chain 1.